Consider the following 81-residue polypeptide: Small ribosomal subunit protein bS18 (81 aa).

The protein belongs to the bacterial ribosomal protein bS18 family. Part of the 30S ribosomal subunit. Forms a tight heterodimer with protein bS6.

In terms of biological role, binds as a heterodimer with protein bS6 to the central domain of the 16S rRNA, where it helps stabilize the platform of the 30S subunit. The protein is Small ribosomal subunit protein bS18 of Chlamydia muridarum (strain MoPn / Nigg).